The sequence spans 762 residues: 1-phosphatidylinositol 4,5-bisphosphate phosphodiesterase delta-4 (762 aa).

One can recognise a PH domain in the interval 16–124; it reads LLMQEGMPMR…WMRGLQLLVD (109 aa). The segment at 26 to 53 is substrate binding; that stretch reads KVRSKSWKKLRYFRLQNDGMTVWHARQA. 3 consecutive EF-hand domains span residues 134 to 169, 170 to 205, and 206 to 237; these read RLDQ…MNVE, MDQE…LTKR, and AEVQ…EQKE. Positions 147, 149, 151, 153, 158, 183, 185, 187, 189, and 194 each coordinate Ca(2+). The GBA motif lies at 213–243; it reads ESFSADGQKLTLLEFLDFLQEEQKERDCTSE. A PI-PLC X-box domain is found at 290-435; sequence QDMTQPLNHY…LRRKILVKGK (146 aa). Histidine 305 is an active-site residue. 3 residues coordinate Ca(2+): asparagine 306, glutamate 335, and aspartate 337. Histidine 350 is an active-site residue. Glutamate 384 is a binding site for Ca(2+). 2 residues coordinate substrate: lysine 433 and lysine 435. Residues 443-471 are compositionally biased toward acidic residues; that stretch reads LEYEEEEAEPELEESELALESQFETEPEP. Positions 443–483 are disordered; the sequence is LEYEEEEAEPELEESELALESQFETEPEPQEQNLQNKDKKK. At serine 457 the chain carries Phosphoserine. The PI-PLC Y-box domain maps to 493–609; that stretch reads LSSLVIYLKS…GYVLKPDFLR (117 aa). Substrate-binding residues include serine 522 and arginine 549. Residues 609–736 enclose the C2 domain; sequence RDIQSSFHPE…QGYRHIHLLS (128 aa). Isoleucine 650, aspartate 652, asparagine 676, aspartate 705, tyrosine 706, and aspartate 707 together coordinate Ca(2+). The PDZ-binding motif lies at 731 to 734; that stretch reads HIHL.

As to quaternary structure, interacts with GRIP1. In terms of assembly, interacts (via GBA motif) with guanine nucleotide-binding protein G(i) alpha subunit GNAI3 (inactive GDP-bound form); high-affinity interaction. Interacts (via GBA motif) with guanine nucleotide-binding protein G(i) alpha subunit GNAI3 (inactive GDP-bound form); low-affinity interaction. Ca(2+) serves as cofactor. Highly expressed in skeletal muscle and kidney tissues, and at moderate level in intestinal tissue. Expressed in corneal epithelial cells.

The protein resides in the membrane. It is found in the nucleus. Its subcellular location is the cytoplasm. The protein localises to the endoplasmic reticulum. The enzyme catalyses a 1,2-diacyl-sn-glycero-3-phospho-(1D-myo-inositol-4,5-bisphosphate) + H2O = 1D-myo-inositol 1,4,5-trisphosphate + a 1,2-diacyl-sn-glycerol + H(+). It catalyses the reaction a 1,2-diacyl-sn-glycero-3-phospho-(1D-myo-inositol) + H2O = 1D-myo-inositol 1-phosphate + a 1,2-diacyl-sn-glycerol + H(+). Functionally, hydrolyzes the phosphatidylinositol 4,5-bisphosphate (PIP2) to generate 2 second messenger molecules diacylglycerol (DAG) and inositol 1,4,5-trisphosphate (IP3). DAG mediates the activation of protein kinase C (PKC), while IP3 releases Ca(2+) from intracellular stores. Required for acrosome reaction in sperm during fertilization, probably by acting as an important enzyme for intracellular Ca(2+) mobilization in the zona pellucida-induced acrosome reaction. May play a role in cell growth. Modulates the liver regeneration in cooperation with nuclear PKC. Overexpression up-regulates the Erk signaling pathway and proliferation. Its function is as follows. Acts as a non-receptor guanine nucleotide exchange factor which binds to and activates guanine nucleotide-binding protein (G-protein) alpha subunit GNAI3. This Homo sapiens (Human) protein is 1-phosphatidylinositol 4,5-bisphosphate phosphodiesterase delta-4.